The following is a 203-amino-acid chain: Somatotropin (203 aa).

The N-terminal stretch at 1-17 is a signal peptide; sequence MDRVVIVLSVLSVAASS. Glutamine 18 carries the pyrrolidone carboxylic acid modification. Histidine 35 serves as a coordination point for Zn(2+). A disulfide bridge links cysteine 68 with cysteine 176. Residue glutamate 185 coordinates Zn(2+). Residues cysteine 193 and cysteine 201 are joined by a disulfide bond.

Belongs to the somatotropin/prolactin family.

It localises to the secreted. Its function is as follows. Growth hormone plays an important role in growth control and is involved in the regulation of several anabolic processes. Implicated as an osmoregulatory substance important for seawater adaptation. The sequence is that of Somatotropin (gh) from Solea senegalensis (Senegalese sole).